Consider the following 427-residue polypeptide: ATP-sensitive inward rectifier potassium channel 12 (427 aa).

The Cytoplasmic portion of the chain corresponds to 1-77 (MTASGRTNPY…LADMFTTCVD (77 aa)). Residue cysteine 75 is modified to S-nitrosocysteine. Residues 78–104 (IRWRYMLLIFSLAFLASWLLFGVIFWV) form a helical membrane-spanning segment. Residues arginine 79 and arginine 81 each coordinate a 1,2-diacyl-sn-glycero-3-phospho-(1D-myo-inositol-4,5-bisphosphate). Residues 105–129 (IAVAHGDLEPAEAHGRTPCVLQVHG) are Extracellular-facing. Cysteine 123 and cysteine 155 are oxidised to a cystine. The segment at residues 130–146 (FMAAFLFSIETQTTIGY) is an intramembrane region (helical; Pore-forming). The K(+) site is built by threonine 143, isoleucine 144, glycine 145, and tyrosine 146. The short motif at 143 to 148 (TIGYGL) is the Selectivity filter element. Residues 147–155 (GLRCVTEEC) are Extracellular-facing. A helical transmembrane segment spans residues 156–183 (PVAVFMVVAQSIVGCIIDSFMIGAIMAK). Residues lysine 183 and lysine 188 each contribute to the a 1,2-diacyl-sn-glycero-3-phospho-(1D-myo-inositol-4,5-bisphosphate) site. At 184 to 427 (MARPKKRAQT…QRPYRRESEI (244 aa)) the chain is on the cytoplasmic side. Residues 387-396 (DEEDEVDGEQ) are compositionally biased toward acidic residues. The segment at 387–427 (DEEDEVDGEQDSLGPQARRDFDRPQAGTALEQRPYRRESEI) is disordered. Positions 425–427 (SEI) match the PDZ-binding motif.

It belongs to the inward rectifier-type potassium channel (TC 1.A.2.1) family. KCNJ12 subfamily. In terms of assembly, homotetramer. Forms heteromer with KCNJ4. Association, via its PDZ-recognition domain, with LIN7A, LIN7B, LIN7C, DLG1, CASK and APBA1 plays a key role in its localization and trafficking.

Its subcellular location is the membrane. It carries out the reaction K(+)(in) = K(+)(out). Its activity is regulated as follows. Activated by phosphatidylinositol 4,5-biphosphate (PtdIns(4,5)P2). PtdIns(4,5)P2 binding to the cytoplasmic side of the channel triggers a conformation change leading to channel opening. Its function is as follows. Inward rectifying potassium channel that probably participates in controlling the resting membrane potential in electrically excitable cells. Probably participates in establishing action potential waveform and excitability of neuronal and muscle tissues. Inward rectifier potassium channels are characterized by a greater tendency to allow potassium to flow into the cell rather than out of it. Their voltage dependence is regulated by the concentration of extracellular potassium; as external potassium is raised, the voltage range of the channel opening shifts to more positive voltages. The inward rectification is mainly due to the blockage of outward current by internal magnesium. In Bos taurus (Bovine), this protein is ATP-sensitive inward rectifier potassium channel 12 (KCNJ12).